The following is a 194-amino-acid chain: Early growth response protein 1 (194 aa).

C2H2-type zinc fingers lie at residues 1–18, 24–46, and 52–74; these read CDRR…IRIH, FQCR…IRTH, and FACD…TKIH. Residues 66 to 88 are disordered; sequence ERKRHTKIHLRQKDKKVEKAASV. Over residues 69-79 the composition is skewed to basic residues; it reads RHTKIHLRQKD.

Belongs to the EGR C2H2-type zinc-finger protein family.

Its subcellular location is the nucleus. The protein resides in the cytoplasm. Functionally, transcriptional regulator. Recognizes and binds to the DNA sequence 5'-GCG(T/G)GGGCG-3'(EGR-site) in the promoter region of target genes. Binds double-stranded target DNA, irrespective of the cytosine methylation status. Regulates the transcription of numerous target genes, and thereby plays an important role in regulating the response to growth factors, DNA damage, and ischemia. Plays a role in the regulation of cell survival, proliferation and cell death. Mediates responses to ischemia and hypoxia; regulates the expression of proteins that are involved in inflammatory processes. Plays a role in regulating the expression of circadian clock genes. This Coturnix japonica (Japanese quail) protein is Early growth response protein 1 (EGR1).